We begin with the raw amino-acid sequence, 134 residues long: Psoriasis susceptibility 1 candidate gene 2 protein homolog (134 aa).

The signal sequence occupies residues 1–21 (MLTWKLLGLLVLCLCAGGISG). The tract at residues 18–134 (GISGNGDPSP…DLDPPQEEYR (117 aa)) is disordered. Composition is skewed to pro residues over residues 39–67 (PPLP…PPGS) and 81–98 (PPKP…PDDP). Acidic residues predominate over residues 122 to 134 (EEPDLDPPQEEYR).

Its subcellular location is the secreted. The chain is Psoriasis susceptibility 1 candidate gene 2 protein homolog (Psors1c2) from Mus musculus (Mouse).